The chain runs to 49 residues: Large ribosomal subunit protein bL33 (49 aa).

Belongs to the bacterial ribosomal protein bL33 family.

This chain is Large ribosomal subunit protein bL33, found in Syntrophobacter fumaroxidans (strain DSM 10017 / MPOB).